A 439-amino-acid chain; its full sequence is Adenylosuccinate synthetase (439 aa).

GTP-binding positions include 14–20 (GDEGKGK) and 42–44 (GHT). Catalysis depends on Asp-15, which acts as the Proton acceptor. The Mg(2+) site is built by Asp-15 and Gly-42. IMP is bound by residues 15–18 (DEGK), 40–43 (NAGH), Thr-130, Arg-144, Gln-225, Thr-240, and Arg-304. His-43 functions as the Proton donor in the catalytic mechanism. Residue 300–306 (TTTGRRR) coordinates substrate. GTP is bound by residues Arg-306, 332-334 (KLD), and 414-416 (SLG).

It belongs to the adenylosuccinate synthetase family. As to quaternary structure, homodimer. It depends on Mg(2+) as a cofactor.

The protein localises to the cytoplasm. The enzyme catalyses IMP + L-aspartate + GTP = N(6)-(1,2-dicarboxyethyl)-AMP + GDP + phosphate + 2 H(+). The protein operates within purine metabolism; AMP biosynthesis via de novo pathway; AMP from IMP: step 1/2. Functionally, plays an important role in the de novo pathway of purine nucleotide biosynthesis. Catalyzes the first committed step in the biosynthesis of AMP from IMP. The protein is Adenylosuccinate synthetase of Synechococcus sp. (strain CC9902).